The following is a 1277-amino-acid chain: NPC intracellular cholesterol transporter 1 (1277 aa).

The first 22 residues, 1-22, serve as a signal peptide directing secretion; it reads MSARGPAFGLLLLLLCPVQVFS. At 23-269 the chain is on the lumenal side; the sequence is QSCVWYGECG…WRILGLDAMY (247 aa). Disulfide bonds link Cys-25–Cys-74, Cys-31–Cys-42, Cys-63–Cys-109, Cys-75–Cys-113, Cys-97–Cys-238, Cys-100–Cys-160, Cys-177–Cys-184, Cys-227–Cys-243, and Cys-240–Cys-247. Cholesterol is bound at residue Asn-41. An N-linked (GlcNAc...) asparagine glycan is attached at Asn-70. Gln-79 is a binding site for cholesterol. N-linked (GlcNAc...) asparagine glycosylation is found at Asn-122 and Asn-135. An important for cholesterol binding and cholesterol transfer from NPC1 to liposomes region spans residues 175–205; that stretch reads LLCGREAQACNATNWIEYMFNKDNGQAPFTI. Residues Asn-185 and Asn-222 are each glycosylated (N-linked (GlcNAc...) asparagine). The chain crosses the membrane as a helical span at residues 270-290; that stretch reads VIMWSSYMAFLIVFFGAFFAV. Residues 291 to 350 lie on the Cytoplasmic side of the membrane; sequence WCYRKRYFVSEYTPIDGNIAFSVNSSDKGQAFCCDPLGAAFERGLRRLFAQWGAFCVRHP. The helical transmembrane segment at 351–371 threads the bilayer; it reads GCVVFFSLAFIVACSSGLVFI. Topologically, residues 372–621 are lumenal; it reads RVTTDPVDLW…ELNRESNSDL (250 aa). N-linked (GlcNAc...) asparagine glycans are attached at residues Asn-415, Asn-452, Asn-459, and Asn-478. 2 cysteine pairs are disulfide-bonded: Cys-468/Cys-479 and Cys-516/Cys-533. Residues 620–785 enclose the SSD domain; sequence DLFTILISYA…ITCFVSLLGL (166 aa). Residues 622–642 form a helical membrane-spanning segment; sequence FTILISYAIMFLYISIALGHI. Topologically, residues 643–653 are cytoplasmic; sequence KSCSRLLVDSK. A helical membrane pass occupies residues 654–674; sequence ISLGIAGILIVLSSVACSLGI. At 675 to 677 the chain is on the lumenal side; sequence FSY. The chain crosses the membrane as a helical span at residues 678–698; the sequence is IGVPLTLIVIEVIPFLVLAVG. Over 699–734 the chain is Cytoplasmic; it reads VDNIFILVQTYQRDERLQGETLDQQLGRVLGEVAPS. A helical transmembrane segment spans residues 735–755; the sequence is MFLSSFSETVAFFLGGLSVVP. Topologically, residues 756-759 are lumenal; the sequence is AVHT. The helical transmembrane segment at 760–780 threads the bilayer; that stretch reads FSLFAGMAVLIDFLLQITCFV. Over 781 to 832 the chain is Cytoplasmic; sequence SLLGLDIKRQEKNRLDVVCCVQGAEDGAGVQASESCLFRFFKNSYAPLLLKD. The helical transmembrane segment at 833–853 threads the bilayer; the sequence is WMRPIVIAVFVGVLSFSIAVL. Residues 854–1097 are Lumenal-facing; it reads NKVEIGLDQS…EQYLTVIDDT (244 aa). N-linked (GlcNAc...) asparagine glycosylation is present at Asn-898. A disulfide bond links Cys-909 and Cys-914. N-linked (GlcNAc...) asparagine glycosylation is found at Asn-916, Asn-931, Asn-961, Asn-968, Asn-1028, and Asn-1063. Cystine bridges form between Cys-956/Cys-1011, Cys-957/Cys-979, and Cys-967/Cys-976. Residues 1098–1118 form a helical membrane-spanning segment; that stretch reads IFNLGVSLGAIFLVTVVLMGC. Topologically, residues 1119 to 1123 are cytoplasmic; that stretch reads ELWAT. Residues 1124-1144 form a helical membrane-spanning segment; sequence VIMCVTIAMILVNMFGVMWLW. Position 1145 (Gly-1145) is a topological domain, lumenal. A helical transmembrane segment spans residues 1146-1166; the sequence is ISLNAVSLVNLVMSCGISVEF. The Cytoplasmic segment spans residues 1167–1194; it reads CSHITRAFTLSTKGSRVDRAEEALAHMG. The helical transmembrane segment at 1195–1215 threads the bilayer; the sequence is SSVFSGITLTKFGGIVVLAFA. Residues 1216-1226 lie on the Lumenal side of the membrane; the sequence is KSQIFQIFYFR. The helical transmembrane segment at 1227 to 1247 threads the bilayer; it reads MYLAIVLLGATHGLIFLPVLL. Residues 1248–1277 lie on the Cytoplasmic side of the membrane; sequence SYIGPSINKAKSLATQERYKGTEREQLLNF. Residues 1274 to 1277 form a required for location in lysosomes region; that stretch reads LLNF. A Di-leucine motif motif is present at residues 1274–1277; sequence LLNF.

Belongs to the patched family. Interacts (via the second lumenal domain) with NPC2. Interacts with TMEM97; the interaction may decrease NPC1 availability to the cell. Interacts with TIM1. Interacts with SLC38A9; this interaction inhibits cholesterol-mediated mTORC1 activation via its sterol transport activity. Post-translationally, N-glycosylated. In terms of tissue distribution, detected in corpus luteum, granulosa cells and adrenal gland.

Its subcellular location is the late endosome membrane. It is found in the lysosome membrane. The enzyme catalyses cholesterol(in) = cholesterol(out). Functionally, intracellular cholesterol transporter which acts in concert with NPC2 and plays an important role in the egress of cholesterol from the endosomal/lysosomal compartment. Unesterified cholesterol that has been released from LDLs in the lumen of the late endosomes/lysosomes is transferred by NPC2 to the cholesterol-binding pocket in the N-terminal domain of NPC1. Cholesterol binds to NPC1 with the hydroxyl group buried in the binding pocket. Binds oxysterol with higher affinity than cholesterol. May play a role in vesicular trafficking in glia, a process that may be crucial for maintaining the structural and functional integrity of nerve terminals. Inhibits cholesterol-mediated mTORC1 activation throught its interaction with SLC38A9. This is NPC intracellular cholesterol transporter 1 from Sus scrofa (Pig).